The sequence spans 828 residues: DNA topoisomerase 3 (828 aa).

The Toprim domain occupies 4–149; sequence RILNVAEKPS…KFEFYRAHFS (146 aa). A Topo IA-type catalytic domain is found at 167–617; that stretch reads NEKDSIAVDT…STIEKYKQLY (451 aa). Y361 serves as the catalytic O-(5'-phospho-DNA)-tyrosine intermediate. The interval 763-828 is disordered; it reads QQQQQQQQQQ…SDRNNNNFIF (66 aa).

This sequence belongs to the type IA topoisomerase family.

The enzyme catalyses ATP-independent breakage of single-stranded DNA, followed by passage and rejoining.. Releases the supercoiling and torsional tension of DNA introduced during the DNA replication and transcription by transiently cleaving and rejoining one strand of the DNA duplex. Introduces a single-strand break via transesterification at a target site in duplex DNA. The scissile phosphodiester is attacked by the catalytic tyrosine of the enzyme, resulting in the formation of a DNA-(5'-phosphotyrosyl)-enzyme intermediate and the expulsion of a 3'-OH DNA strand. The free DNA strand than undergoes passage around the unbroken strand thus removing DNA supercoils. Finally, in the religation step, the DNA 3'-OH attacks the covalent intermediate to expel the active-site tyrosine and restore the DNA phosphodiester backbone. This chain is DNA topoisomerase 3 (top3), found in Dictyostelium discoideum (Social amoeba).